The following is a 217-amino-acid chain: Elongation factor Ts (217 aa).

The tract at residues 82-85 is involved in Mg(2+) ion dislocation from EF-Tu; it reads TDFV.

It belongs to the EF-Ts family.

It localises to the cytoplasm. Functionally, associates with the EF-Tu.GDP complex and induces the exchange of GDP to GTP. It remains bound to the aminoacyl-tRNA.EF-Tu.GTP complex up to the GTP hydrolysis stage on the ribosome. The sequence is that of Elongation factor Ts from Desulforamulus reducens (strain ATCC BAA-1160 / DSM 100696 / MI-1) (Desulfotomaculum reducens).